The chain runs to 179 residues: Crossover junction endodeoxyribonuclease RuvC (179 aa).

Catalysis depends on residues Asp-7, Glu-67, and Asp-139. Mg(2+) contacts are provided by Asp-7, Glu-67, and Asp-139.

The protein belongs to the RuvC family. As to quaternary structure, homodimer which binds Holliday junction (HJ) DNA. The HJ becomes 2-fold symmetrical on binding to RuvC with unstacked arms; it has a different conformation from HJ DNA in complex with RuvA. In the full resolvosome a probable DNA-RuvA(4)-RuvB(12)-RuvC(2) complex forms which resolves the HJ. The cofactor is Mg(2+).

It is found in the cytoplasm. The enzyme catalyses Endonucleolytic cleavage at a junction such as a reciprocal single-stranded crossover between two homologous DNA duplexes (Holliday junction).. The RuvA-RuvB-RuvC complex processes Holliday junction (HJ) DNA during genetic recombination and DNA repair. Endonuclease that resolves HJ intermediates. Cleaves cruciform DNA by making single-stranded nicks across the HJ at symmetrical positions within the homologous arms, yielding a 5'-phosphate and a 3'-hydroxyl group; requires a central core of homology in the junction. The consensus cleavage sequence is 5'-(A/T)TT(C/G)-3'. Cleavage occurs on the 3'-side of the TT dinucleotide at the point of strand exchange. HJ branch migration catalyzed by RuvA-RuvB allows RuvC to scan DNA until it finds its consensus sequence, where it cleaves and resolves the cruciform DNA. This chain is Crossover junction endodeoxyribonuclease RuvC, found in Sorangium cellulosum (strain So ce56) (Polyangium cellulosum (strain So ce56)).